The following is a 127-amino-acid chain: uncharacterized protein (127 aa).

A coiled-coil region spans residues 71–126 (FYLREYRRIRRRIKELKNRAKYISKGEIAYNPKIMKEVEALKEKLSEIEKKIEELK).

This is an uncharacterized protein from Aquifex aeolicus (strain VF5).